Reading from the N-terminus, the 490-residue chain is Cytochrome P450 2C25 (490 aa).

A heme-binding site is contributed by C435.

The protein belongs to the cytochrome P450 family. It depends on heme as a cofactor.

Its subcellular location is the endoplasmic reticulum membrane. The protein resides in the microsome membrane. The catalysed reaction is an organic molecule + reduced [NADPH--hemoprotein reductase] + O2 = an alcohol + oxidized [NADPH--hemoprotein reductase] + H2O + H(+). Functionally, catalyzes the hydroxylation of tolbutamide and the N-demethylation of aminopyrine and benzphetamine. Also has testosterone hydroxylase (16 beta) activity. The chain is Cytochrome P450 2C25 (CYP2C25) from Mesocricetus auratus (Golden hamster).